The following is a 128-amino-acid chain: Small ribosomal subunit protein uS9 (128 aa).

Belongs to the universal ribosomal protein uS9 family.

The chain is Small ribosomal subunit protein uS9 from Flavobacterium psychrophilum (strain ATCC 49511 / DSM 21280 / CIP 103535 / JIP02/86).